A 294-amino-acid chain; its full sequence is Protein ATC1/LIC4 (294 aa).

Residues 114 to 178 (YTGKASLDKS…SSSLASSDAN (65 aa)) are disordered. A compositionally biased stretch (basic and acidic residues) spans 130-145 (HKPDKEQKNYKIDKPT). The span at 153–175 (LKTTNEPMLSPASLSPSSSLASS) shows a compositional bias: low complexity.

The protein resides in the cytoplasm. It localises to the nucleus. In terms of biological role, involved in cation homeostasis and in the regulation of the cation stress signaling cascades. Also involved in bipolar budding. The sequence is that of Protein ATC1/LIC4 (ATC1) from Saccharomyces cerevisiae (strain ATCC 204508 / S288c) (Baker's yeast).